Reading from the N-terminus, the 174-residue chain is uncharacterized protein (174 aa).

Residues 126-146 form a helical membrane-spanning segment; sequence AIDEFIITVIPVVLGSGIPLF.

It to B.subtilis YyaP.

It localises to the membrane. This is an uncharacterized protein from Bacillus subtilis (strain 168).